Here is a 203-residue protein sequence, read N- to C-terminus: Peptidyl-tRNA hydrolase (203 aa).

Tyr-18 is a binding site for tRNA. Residue His-23 is the Proton acceptor of the active site. The tRNA site is built by Tyr-69, Asn-71, and Asn-117.

Belongs to the PTH family. Monomer.

The protein localises to the cytoplasm. The enzyme catalyses an N-acyl-L-alpha-aminoacyl-tRNA + H2O = an N-acyl-L-amino acid + a tRNA + H(+). Its function is as follows. Hydrolyzes ribosome-free peptidyl-tRNAs (with 1 or more amino acids incorporated), which drop off the ribosome during protein synthesis, or as a result of ribosome stalling. In terms of biological role, catalyzes the release of premature peptidyl moieties from peptidyl-tRNA molecules trapped in stalled 50S ribosomal subunits, and thus maintains levels of free tRNAs and 50S ribosomes. The sequence is that of Peptidyl-tRNA hydrolase from Parasynechococcus marenigrum (strain WH8102).